The chain runs to 255 residues: 3-dehydroquinate dehydratase (255 aa).

3-dehydroquinate-binding positions include 47-49 (EWR) and arginine 83. Histidine 144 functions as the Proton donor/acceptor in the catalytic mechanism. The Schiff-base intermediate with substrate role is filled by lysine 171. Positions 214, 233, and 237 each coordinate 3-dehydroquinate.

It belongs to the type-I 3-dehydroquinase family. Homodimer.

It carries out the reaction 3-dehydroquinate = 3-dehydroshikimate + H2O. It participates in metabolic intermediate biosynthesis; chorismate biosynthesis; chorismate from D-erythrose 4-phosphate and phosphoenolpyruvate: step 3/7. Functionally, involved in the third step of the chorismate pathway, which leads to the biosynthesis of aromatic amino acids. Catalyzes the cis-dehydration of 3-dehydroquinate (DHQ) and introduces the first double bond of the aromatic ring to yield 3-dehydroshikimate. This is 3-dehydroquinate dehydratase from Alkaliphilus oremlandii (strain OhILAs) (Clostridium oremlandii (strain OhILAs)).